We begin with the raw amino-acid sequence, 348 residues long: Selenide, water dikinase (348 aa).

Residue C17 is part of the active site. ATP contacts are provided by residues K20 and 47 to 49; that span reads THD. Residue D50 participates in Mg(2+) binding. Residues D67, D90, and 138–140 each bind ATP; that span reads GHT. A Mg(2+)-binding site is contributed by D90. D226 is a Mg(2+) binding site.

This sequence belongs to the selenophosphate synthase 1 family. Class I subfamily. In terms of assembly, homodimer. Requires Mg(2+) as cofactor.

It carries out the reaction hydrogenselenide + ATP + H2O = selenophosphate + AMP + phosphate + 2 H(+). Its function is as follows. Synthesizes selenophosphate from selenide and ATP. The polypeptide is Selenide, water dikinase (Porphyromonas gingivalis (strain ATCC 33277 / DSM 20709 / CIP 103683 / JCM 12257 / NCTC 11834 / 2561)).